We begin with the raw amino-acid sequence, 183 residues long: Protein Syd (183 aa).

This sequence belongs to the Syd family.

It is found in the cell inner membrane. Functionally, interacts with the SecY protein in vivo. May bind preferentially to an uncomplexed state of SecY, thus functioning either as a chelating agent for excess SecY in the cell or as a regulatory factor that negatively controls the translocase function. The sequence is that of Protein Syd from Idiomarina loihiensis (strain ATCC BAA-735 / DSM 15497 / L2-TR).